The primary structure comprises 113 residues: Small ribosomal subunit protein bS6 (113 aa).

It belongs to the bacterial ribosomal protein bS6 family.

Binds together with bS18 to 16S ribosomal RNA. This is Small ribosomal subunit protein bS6 from Wigglesworthia glossinidia brevipalpis.